The following is a 430-amino-acid chain: MANVVVVGSQWGDEGKGKIVDWLSEQADVVVRFQGGHNAGHTLVVDGVTYKLSLLPSGVVRPGKLSVIGNGVVLDPQALVDELARLESQGVHVGPDRLRIAENTPLILPLHRELDALRENASEGTRIGTTKRGIGPAYEDKVGRRAIRLVDLVDPKALPAKVERLLTHHNLIRRGLGVEEVNPQALVDELLALAPKVLPYMDRVWELLDKARKDGKKILFEGAQGALLDIDHGTYPYVTSSNTVASSAAGGSGVGPGALDYVLGITKAYTTRVGEGPFPTELTDEVGKTLGTKGREFGVVTGRPRRCGWFDAVLVRQTVRTCGIHGIALTKLDVLDGFDEIKVCVGYKLDGKEIDYFPSEMGAQARVEPIYETIEGWTDSTAGARSWADLPAEAVKYVRWLEELIGCPVAVLSTSPERNDTILVHNPFQA.

Residues 12–18 and 40–42 each bind GTP; these read GDEGKGK and GHT. Asp-13 functions as the Proton acceptor in the catalytic mechanism. Mg(2+) is bound by residues Asp-13 and Gly-40. IMP-binding positions include 13-16, 38-41, Thr-130, Arg-144, Gln-224, Thr-239, and Arg-303; these read DEGK and NAGH. His-41 acts as the Proton donor in catalysis. 299–305 serves as a coordination point for substrate; it reads VVTGRPR. Residues Arg-305, 331 to 333, and 413 to 415 each bind GTP; these read KLD and STS.

This sequence belongs to the adenylosuccinate synthetase family. In terms of assembly, homodimer. Mg(2+) serves as cofactor.

It is found in the cytoplasm. The enzyme catalyses IMP + L-aspartate + GTP = N(6)-(1,2-dicarboxyethyl)-AMP + GDP + phosphate + 2 H(+). It functions in the pathway purine metabolism; AMP biosynthesis via de novo pathway; AMP from IMP: step 1/2. Its function is as follows. Plays an important role in the de novo pathway of purine nucleotide biosynthesis. Catalyzes the first committed step in the biosynthesis of AMP from IMP. In Azorhizobium caulinodans (strain ATCC 43989 / DSM 5975 / JCM 20966 / LMG 6465 / NBRC 14845 / NCIMB 13405 / ORS 571), this protein is Adenylosuccinate synthetase.